Consider the following 323-residue polypeptide: CYFIP-related Rac1 interactor A (323 aa).

This sequence belongs to the CYRI family.

It is found in the membrane. May negatively regulate RAC1 signaling and RAC1-driven cytoskeletal remodeling. May regulate chemotaxis, cell migration and epithelial polarization by controlling the polarity, plasticity, duration and extent of protrusions. This is CYFIP-related Rac1 interactor A (CYRIA) from Gallus gallus (Chicken).